Here is a 62-residue protein sequence, read N- to C-terminus: Probable tautomerase SH1546 (62 aa).

Catalysis depends on Pro2, which acts as the Proton acceptor; via imino nitrogen.

Belongs to the 4-oxalocrotonate tautomerase family.

The protein is Probable tautomerase SH1546 of Staphylococcus haemolyticus (strain JCSC1435).